Reading from the N-terminus, the 49-residue chain is Osteocalcin (49 aa).

Residues Tyr1–Gly47 enclose the Gla domain. A 4-hydroxyproline modification is found at Pro9. Ca(2+) contacts are provided by Glu17, Glu21, Glu24, and Asp30. Glu17, Glu21, and Glu24 each carry 4-carboxyglutamate. Cysteines 23 and 29 form a disulfide.

The protein belongs to the osteocalcin/matrix Gla protein family. Gamma-carboxyglutamic acid residues are formed by vitamin K dependent carboxylation. These residues are essential for the binding of calcium.

Its subcellular location is the secreted. Its function is as follows. The carboxylated form is one of the main organic components of the bone matrix, which constitutes 1-2% of the total bone protein: it acts as a negative regulator of bone formation and is required to limit bone formation without impairing bone resorption or mineralization. The carboxylated form binds strongly to apatite and calcium. In terms of biological role, the uncarboxylated form acts as a hormone secreted by osteoblasts, which regulates different cellular processes, such as energy metabolism, male fertility and brain development. Regulates of energy metabolism by acting as a hormone favoring pancreatic beta-cell proliferation, insulin secretion and sensitivity and energy expenditure. Uncarboxylated osteocalcin hormone also promotes testosterone production in the testes: acts as a ligand for G protein-coupled receptor GPRC6A at the surface of Leydig cells, initiating a signaling response that promotes the expression of enzymes required for testosterone synthesis in a CREB-dependent manner. Also acts as a regulator of brain development: osteocalcin hormone crosses the blood-brain barrier and acts as a ligand for GPR158 on neurons, initiating a signaling response that prevents neuronal apoptosis in the hippocampus, favors the synthesis of all monoamine neurotransmitters and inhibits that of gamma-aminobutyric acid (GABA). Osteocalcin also crosses the placenta during pregnancy and maternal osteocalcin is required for fetal brain development. The sequence is that of Osteocalcin from Lama guanicoe (Guanaco).